Reading from the N-terminus, the 239-residue chain is LexA repressor (239 aa).

The segment at residues 26–46 (FDEMKEALDLASKSGIHRLIT) is a DNA-binding region (H-T-H motif). The segment at 90 to 110 (GSLGKTPPPPARPAPVATNDD) is disordered. Catalysis depends on for autocatalytic cleavage activity residues Ser-160 and Lys-198.

Belongs to the peptidase S24 family. As to quaternary structure, homodimer.

The catalysed reaction is Hydrolysis of Ala-|-Gly bond in repressor LexA.. In terms of biological role, represses a number of genes involved in the response to DNA damage (SOS response), including recA and lexA. In the presence of single-stranded DNA, RecA interacts with LexA causing an autocatalytic cleavage which disrupts the DNA-binding part of LexA, leading to derepression of the SOS regulon and eventually DNA repair. This chain is LexA repressor, found in Brucella anthropi (strain ATCC 49188 / DSM 6882 / CCUG 24695 / JCM 21032 / LMG 3331 / NBRC 15819 / NCTC 12168 / Alc 37) (Ochrobactrum anthropi).